The chain runs to 151 residues: Brain ribonuclease (151 aa).

The disordered stretch occupies residues 1-25 (KESAAAKFRRQHMDAGSSSSGNSNY). Substrate is bound by residues Lys-7 and Arg-10. The Proton acceptor role is filled by His-12. Cystine bridges form between Cys-26-Cys-84, Cys-40-Cys-95, Cys-58-Cys-110, and Cys-65-Cys-72. 41–45 (KPVNT) provides a ligand contact to substrate. N-linked (GlcNAc...) asparagine glycosylation is present at Asn-62. Lys-66 and Arg-85 together coordinate substrate. The active-site Proton donor is His-119. O-linked (GalNAc...) threonine glycosylation occurs at Thr-129. An O-linked (GalNAc...) serine glycan is attached at Ser-133.

This sequence belongs to the pancreatic ribonuclease family.

It localises to the secreted. In Axis porcinus (Hog deer), this protein is Brain ribonuclease (BRN).